The chain runs to 365 residues: Fructose-1,6-bisphosphatase class 1 2 (365 aa).

4 residues coordinate Mg(2+): Glu-100, Asp-122, Leu-124, and Asp-125. Residues 125–128 and Asn-221 contribute to the substrate site; that span reads DGSS. Glu-293 provides a ligand contact to Mg(2+).

This sequence belongs to the FBPase class 1 family. As to quaternary structure, homotetramer. Mg(2+) serves as cofactor.

It localises to the cytoplasm. It carries out the reaction beta-D-fructose 1,6-bisphosphate + H2O = beta-D-fructose 6-phosphate + phosphate. The protein operates within carbohydrate biosynthesis; gluconeogenesis. The protein is Fructose-1,6-bisphosphatase class 1 2 of Leptothrix cholodnii (strain ATCC 51168 / LMG 8142 / SP-6) (Leptothrix discophora (strain SP-6)).